A 394-amino-acid chain; its full sequence is NAD(P)H-quinone oxidoreductase subunit H (394 aa).

The protein belongs to the complex I 49 kDa subunit family. In terms of assembly, NDH-1 can be composed of about 15 different subunits; different subcomplexes with different compositions have been identified which probably have different functions.

The protein localises to the cellular thylakoid membrane. It carries out the reaction a plastoquinone + NADH + (n+1) H(+)(in) = a plastoquinol + NAD(+) + n H(+)(out). The enzyme catalyses a plastoquinone + NADPH + (n+1) H(+)(in) = a plastoquinol + NADP(+) + n H(+)(out). Its function is as follows. NDH-1 shuttles electrons from an unknown electron donor, via FMN and iron-sulfur (Fe-S) centers, to quinones in the respiratory and/or the photosynthetic chain. The immediate electron acceptor for the enzyme in this species is believed to be plastoquinone. Couples the redox reaction to proton translocation, and thus conserves the redox energy in a proton gradient. Cyanobacterial NDH-1 also plays a role in inorganic carbon-concentration. The protein is NAD(P)H-quinone oxidoreductase subunit H of Prochlorococcus marinus (strain MIT 9303).